We begin with the raw amino-acid sequence, 307 residues long: Carbamate kinase (307 aa).

The protein belongs to the carbamate kinase family.

It is found in the cytoplasm. The enzyme catalyses hydrogencarbonate + NH4(+) + ATP = carbamoyl phosphate + ADP + H2O + H(+). It participates in metabolic intermediate metabolism; carbamoyl phosphate degradation; CO(2) and NH(3) from carbamoyl phosphate: step 1/1. Functionally, carbamate kinase involved in the arginine deiminase pathway of fermentative arginine utilization. The protein is Carbamate kinase (arcC) of Halobacterium salinarum (strain ATCC 700922 / JCM 11081 / NRC-1) (Halobacterium halobium).